Reading from the N-terminus, the 121-residue chain is Small ribosomal subunit protein eS24 (121 aa).

It belongs to the eukaryotic ribosomal protein eS24 family.

The sequence is that of Small ribosomal subunit protein eS24 from Pyrobaculum arsenaticum (strain DSM 13514 / JCM 11321 / PZ6).